A 734-amino-acid polypeptide reads, in one-letter code: Diacylglycerol kinase alpha (734 aa).

EF-hand domains are found at residues 109–144 and 154–189; these read RPED…MMRM and ELRP…TVPL. Residues Asp122, Asp124, Asn126, Glu133, Asp167, Asp169, Ser171, Ser173, and Glu178 each coordinate Ca(2+). 2 consecutive Phorbol-ester/DAG-type zinc fingers follow at residues 204–252 and 268–318; these read QHMW…ALPC and SHVW…GHEC. The DAGKc domain maps to 371–505; it reads SNTHPLLVFV…MDRWSVEVIP (135 aa). Residue Lys483 is modified to N6-acetyllysine.

The protein belongs to the eukaryotic diacylglycerol kinase family. Monomer.

The protein localises to the cytoplasm. Its subcellular location is the cytosol. It catalyses the reaction a 1,2-diacyl-sn-glycerol + ATP = a 1,2-diacyl-sn-glycero-3-phosphate + ADP + H(+). The catalysed reaction is a 1-O-alkyl-sn-glycerol + ATP = a 1-O-alkyl-sn-glycero-3-phosphate + ADP + H(+). The enzyme catalyses 1-O-alkyl-2-acyl-sn-glycerol + ATP = 1-O-alkyl-2-acyl-sn-glycero-3-phosphate + ADP + H(+). It carries out the reaction 1,2-dihexadecanoyl-sn-glycerol + ATP = 1,2-dihexadecanoyl-sn-glycero-3-phosphate + ADP + H(+). It catalyses the reaction 1-hexadecanoyl-2-(9Z-octadecenoyl)-sn-glycerol + ATP = 1-hexadecanoyl-2-(9Z-octadecenoyl)-sn-glycero-3-phosphate + ADP + H(+). The catalysed reaction is 2-(9Z-octadecenoyl)-glycerol + ATP = 2-(9Z-octadecenoyl)-sn-glycero-3-phosphate + ADP + H(+). The enzyme catalyses 1,2-di-(9Z-octadecenoyl)-sn-glycerol + ATP = 1,2-di-(9Z-octadecenoyl)-sn-glycero-3-phosphate + ADP + H(+). It carries out the reaction 1-octadecanoyl-2-(5Z,8Z,11Z,14Z-eicosatetraenoyl)-sn-glycerol + ATP = 1-octadecanoyl-2-(5Z,8Z,11Z,14Z-eicosatetraenoyl)-sn-glycero-3-phosphate + ADP + H(+). It catalyses the reaction 1,2-didecanoyl-sn-glycerol + ATP = 1,2-didecanoyl-sn-glycero-3-phosphate + ADP + H(+). The catalysed reaction is 1-O-hexadecyl-2-acetyl-sn-glycerol + ATP = 1-O-hexadecyl-2-acetyl-sn-glycero-3-phosphate + ADP + H(+). The enzyme catalyses 1-O-hexadecyl-2-(5Z,8Z,11Z,14Z-eicosatetraenoyl)-sn-glycerol + ATP = 1-O-hexadecyl-2-(5Z,8Z,11Z,14Z-eicosatetraenoyl)-sn-glycero-3-phosphate + ADP + H(+). It carries out the reaction 1-O-hexadecyl-2-(9Z-octadecenoyl)-sn-glycerol + ATP = 1-O-hexadecyl-2-(9Z-octadecenoyl)-sn-glycero-3-phosphate + ADP + H(+). It catalyses the reaction 1-O-hexadecyl-sn-glycerol + ATP = 1-O-hexadecyl-sn-glycero-3-phosphate + ADP + H(+). The protein operates within lipid metabolism; glycerolipid metabolism. With respect to regulation, stimulated by calcium and phosphatidylserine. Diacylglycerol kinase that converts diacylglycerol/DAG into phosphatidic acid/phosphatidate/PA and regulates the respective levels of these two bioactive lipids. Thereby, acts as a central switch between the signaling pathways activated by these second messengers with different cellular targets and opposite effects in numerous biological processes. Also plays an important role in the biosynthesis of complex lipids. Can also phosphorylate 1-alkyl-2-acylglycerol in vitro as efficiently as diacylglycerol provided it contains an arachidonoyl group. Also involved in the production of alkyl-lysophosphatidic acid, another bioactive lipid, through the phosphorylation of 1-alkyl-2-acetyl glycerol. The chain is Diacylglycerol kinase alpha (DGKA) from Bos taurus (Bovine).